The primary structure comprises 537 residues: Cytochrome P450 734A5 (537 aa).

The helical transmembrane segment at G13–A33 threads the bilayer. C480 provides a ligand contact to heme.

Belongs to the cytochrome P450 family. Requires heme as cofactor. Exclusively expressed in roots.

The protein resides in the membrane. Cytochrome P450 probably involved in brassinosteroids (BRs) inactivation and regulation of BRs homeostasis. This Oryza sativa subsp. japonica (Rice) protein is Cytochrome P450 734A5 (CYP734A5).